Here is a 962-residue protein sequence, read N- to C-terminus: Protein kinase ORF73 (962 aa).

Disordered stretches follow at residues 1–28 (MADR…NDRP) and 62–152 (STPA…RATT). The span at 81–90 (DSDDDDEEDN) shows a compositional bias: acidic residues. Over residues 143–152 (YDTTGRRATT) the composition is skewed to polar residues. Residues 301–595 (LRAAPVLGKG…ASDLLKSPRY (295 aa)) form the Protein kinase domain. ATP is bound by residues 307–315 (LGKGYFGTV) and Lys324. Asp434 (proton acceptor) is an active-site residue.

Belongs to the protein kinase superfamily. Ser/Thr protein kinase family.

It carries out the reaction L-seryl-[protein] + ATP = O-phospho-L-seryl-[protein] + ADP + H(+). The catalysed reaction is L-threonyl-[protein] + ATP = O-phospho-L-threonyl-[protein] + ADP + H(+). The protein is Protein kinase ORF73 (ORF73) of Ictaluridae (bullhead catfishes).